The following is a 429-amino-acid chain: Enolase (429 aa).

Glutamine 164 is a (2R)-2-phosphoglycerate binding site. Glutamate 206 acts as the Proton donor in catalysis. Mg(2+) is bound by residues aspartate 243, glutamate 286, and aspartate 313. (2R)-2-phosphoglycerate contacts are provided by lysine 338, arginine 367, serine 368, and lysine 389. Catalysis depends on lysine 338, which acts as the Proton acceptor.

The protein belongs to the enolase family. The cofactor is Mg(2+).

It localises to the cytoplasm. It is found in the secreted. The protein localises to the cell surface. It catalyses the reaction (2R)-2-phosphoglycerate = phosphoenolpyruvate + H2O. It participates in carbohydrate degradation; glycolysis; pyruvate from D-glyceraldehyde 3-phosphate: step 4/5. Its function is as follows. Catalyzes the reversible conversion of 2-phosphoglycerate (2-PG) into phosphoenolpyruvate (PEP). It is essential for the degradation of carbohydrates via glycolysis. In Thermosipho melanesiensis (strain DSM 12029 / CIP 104789 / BI429), this protein is Enolase.